A 558-amino-acid chain; its full sequence is 2-isopropylmalate synthase (558 aa).

The Pyruvate carboxyltransferase domain maps to 28 to 304; that stretch reads PIWCSVDLRD…DPELEFSNLN (277 aa). D37, H243, H245, and N279 together coordinate Mg(2+). The tract at residues 438–558 is regulatory domain; sequence NRSPYYLKNY…VSALNRSKLK (121 aa).

The protein belongs to the alpha-IPM synthase/homocitrate synthase family. LeuA type 2 subfamily. As to quaternary structure, homodimer. Mg(2+) serves as cofactor.

Its subcellular location is the cytoplasm. It catalyses the reaction 3-methyl-2-oxobutanoate + acetyl-CoA + H2O = (2S)-2-isopropylmalate + CoA + H(+). It participates in amino-acid biosynthesis; L-leucine biosynthesis; L-leucine from 3-methyl-2-oxobutanoate: step 1/4. Catalyzes the condensation of the acetyl group of acetyl-CoA with 3-methyl-2-oxobutanoate (2-ketoisovalerate) to form 3-carboxy-3-hydroxy-4-methylpentanoate (2-isopropylmalate). The sequence is that of 2-isopropylmalate synthase from Clostridium acetobutylicum (strain ATCC 824 / DSM 792 / JCM 1419 / IAM 19013 / LMG 5710 / NBRC 13948 / NRRL B-527 / VKM B-1787 / 2291 / W).